Consider the following 168-residue polypeptide: MPRSRINANFIDKTSTIVANILLRIIPTTSGEKEAFTYYRDGMSAQSEGNYAEALQNYYEATRPEIDPYDRSYILYNIGLIHTSNGEHTKALEYYFRALERNPFLPQAFNNMAVICHYRGEQAIRQGDSEIAEAWSDQAAEYWKQAIALTPGNYIEAQNWLKITRRFE.

3 TPR repeats span residues 35–68 (AFTY…EIDP), 72–105 (SYIL…NPFL), and 120–153 (GEQA…TPGN).

The protein belongs to the Ycf3 family.

It is found in the plastid. It localises to the chloroplast thylakoid membrane. In terms of biological role, essential for the assembly of the photosystem I (PSI) complex. May act as a chaperone-like factor to guide the assembly of the PSI subunits. This is Photosystem I assembly protein Ycf3 from Acorus calamus var. americanus (American sweet flag).